The chain runs to 399 residues: Putative endoplasmin-like protein (399 aa).

A Glycyl lysine isopeptide (Lys-Gly) (interchain with G-Cter in SUMO2) cross-link involves residue lysine 130. The tract at residues 350 to 399 is disordered; the sequence is LDLAVVEEPDEEPEETAEDKEQDKDKEMDVGTDEEKQETAKESTAEKDEL. A compositionally biased stretch (acidic residues) spans 354-367; that stretch reads VVEEPDEEPEETAE. The segment covering 368 to 399 has biased composition (basic and acidic residues); the sequence is DKEQDKDKEMDVGTDEEKQETAKESTAEKDEL.

Belongs to the heat shock protein 90 family.

Its function is as follows. Putative molecular chaperone. The protein is Putative endoplasmin-like protein (HSP90B2P) of Homo sapiens (Human).